The primary structure comprises 311 residues: AT-hook motif nuclear-localized protein 27 (311 aa).

Residues 40–105 (HHHQHQQHQQ…KNKAKPPIIV (66 aa)) are disordered. The segment covering 55-75 (DDSRESDHSNKDHHQQGRPDS) has biased composition (basic and acidic residues). Residues 86–98 (KRPRGRPPGSKNK) constitute a DNA-binding region (a.T hook). One can recognise a PPC domain in the interval 110–258 (PNALRSHVLE…EEGGGGGGGG (149 aa)). The interval 178 to 183 (GRFEIL) is required for the binding to non-AHL interactors. The segment at 246 to 311 (EEEEEGGGGG…GAGTPSRPPF (66 aa)) is disordered. A compositionally biased stretch (gly residues) spans 252–262 (GGGGGGGGGGP). Positions 263-277 (PQMQQAPSASPPSGV) are enriched in low complexity. Gly residues predominate over residues 278-292 (TGQGQLGGNVGGYGF).

In terms of assembly, homodimer. Interacts with AHL12, AHL25, AHL29, TCP4, TCP13, EF114, ATAF2/NAC081, histone H2B.1, histone H3.3 and histone H4. As to expression, expressed in the hypocotyl and the vascular tissue of seedling.

The protein localises to the nucleus. In terms of biological role, transcription factor that specifically binds AT-rich DNA sequences related to the nuclear matrix attachment regions (MARs). Negatively regulates plant innate immunity (PTI) to pathogens through the down-regulation of the PAMP-triggered FRK1 expression. Acts redundantly with AHL18, AHL22 and AHL29 in the regulation of flowering and regulation of the hypocotyl elongation. Acts as a chromatin remodeling factor that negatively regulates the leaf senescence. Acts redundantly with AHL29/SOB3 to modulate hypocotyl growth inhibition in response to light. This Arabidopsis thaliana (Mouse-ear cress) protein is AT-hook motif nuclear-localized protein 27.